Here is a 26-residue protein sequence, read N- to C-terminus: Dermaseptin-J3 (26 aa).

A Valine amide modification is found at Val26.

Expressed by the skin glands.

It is found in the secreted. In terms of biological role, has antimicrobial activity. The sequence is that of Dermaseptin-J3 from Phasmahyla jandaia (Jandaia leaf frog).